Reading from the N-terminus, the 312-residue chain is Putative pyridoxal kinase BUD16 (312 aa).

The substrate site is built by Ser-9, Thr-44, and Tyr-122. ATP-binding positions include 183-184 and 211-223; these read TS and RVPFIDSYFTGVG. Asp-224 lines the substrate pocket.

Belongs to the pyridoxine kinase family. A divalent metal cation is required as a cofactor.

Its subcellular location is the cytoplasm. It localises to the nucleus. The catalysed reaction is pyridoxal + ATP = pyridoxal 5'-phosphate + ADP + H(+). In terms of biological role, required for synthesis of pyridoxal-5-phosphate from vitamin B6. Important for bud site selection. The sequence is that of Putative pyridoxal kinase BUD16 (BUD16) from Saccharomyces cerevisiae (strain ATCC 204508 / S288c) (Baker's yeast).